We begin with the raw amino-acid sequence, 66 residues long: MSGKKSGLPDGRVPDRNPDGTPAVPWKSRWTEGPLPLWLVATAGGMAVMFVVGLFFYGSYVGVGSA.

Positions 1-27 (MSGKKSGLPDGRVPDRNPDGTPAVPWK) are disordered. Residues 37-57 (LWLVATAGGMAVMFVVGLFFY) form a helical membrane-spanning segment.

It belongs to the PsbJ family. As to quaternary structure, PSII is composed of 1 copy each of membrane proteins PsbA, PsbB, PsbC, PsbD, PsbE, PsbF, PsbH, PsbI, PsbJ, PsbK, PsbL, PsbM, PsbT, PsbX, PsbY, PsbZ, Psb30/Ycf12, peripheral proteins PsbO, CyanoQ (PsbQ), PsbU, PsbV and a large number of cofactors. It forms dimeric complexes.

Its subcellular location is the cellular thylakoid membrane. Its function is as follows. One of the components of the core complex of photosystem II (PSII). PSII is a light-driven water:plastoquinone oxidoreductase that uses light energy to abstract electrons from H(2)O, generating O(2) and a proton gradient subsequently used for ATP formation. It consists of a core antenna complex that captures photons, and an electron transfer chain that converts photonic excitation into a charge separation. The sequence is that of Photosystem II reaction center protein J from Synechococcus sp. (strain RCC307).